Consider the following 354-residue polypeptide: Selenide, water dikinase (354 aa).

U21 is an active-site residue. A non-standard amino acid (selenocysteine) is located at residue U21. ATP is bound by residues K24 and 51–53; that span reads TSD. D54 lines the Mg(2+) pocket. ATP contacts are provided by residues D71, D94, and 141-143; that span reads GHT. D94 serves as a coordination point for Mg(2+). Position 229 (D229) interacts with Mg(2+).

This sequence belongs to the selenophosphate synthase 1 family. Class I subfamily. Homodimer. Requires Mg(2+) as cofactor.

The enzyme catalyses hydrogenselenide + ATP + H2O = selenophosphate + AMP + phosphate + 2 H(+). Functionally, synthesizes selenophosphate from selenide and ATP. This is Selenide, water dikinase from Treponema denticola (strain ATCC 35405 / DSM 14222 / CIP 103919 / JCM 8153 / KCTC 15104).